Reading from the N-terminus, the 332-residue chain is GTP 3',8-cyclase (332 aa).

Residues 7 to 221 enclose the Radical SAM core domain; it reads QYERLHDYVR…FDLCKQAGLD (215 aa). Arg16 lines the GTP pocket. Residues Cys23 and Cys27 each coordinate [4Fe-4S] cluster. S-adenosyl-L-methionine is bound at residue Tyr29. [4Fe-4S] cluster is bound at residue Cys30. Arg66 contacts GTP. Gly70 contacts S-adenosyl-L-methionine. Thr97 contacts GTP. Ser121 is an S-adenosyl-L-methionine binding site. Position 158 (Lys158) interacts with GTP. Met192 contacts S-adenosyl-L-methionine. Cys256 and Cys259 together coordinate [4Fe-4S] cluster. 261-263 serves as a coordination point for GTP; it reads RLR. Residue Cys273 coordinates [4Fe-4S] cluster.

This sequence belongs to the radical SAM superfamily. MoaA family. Monomer and homodimer. [4Fe-4S] cluster serves as cofactor.

It catalyses the reaction GTP + AH2 + S-adenosyl-L-methionine = (8S)-3',8-cyclo-7,8-dihydroguanosine 5'-triphosphate + 5'-deoxyadenosine + L-methionine + A + H(+). The protein operates within cofactor biosynthesis; molybdopterin biosynthesis. Its function is as follows. Catalyzes the cyclization of GTP to (8S)-3',8-cyclo-7,8-dihydroguanosine 5'-triphosphate. The polypeptide is GTP 3',8-cyclase (Limosilactobacillus fermentum (strain NBRC 3956 / LMG 18251) (Lactobacillus fermentum)).